Here is a 468-residue protein sequence, read N- to C-terminus: Glutamate--tRNA ligase (468 aa).

The short motif at 8 to 18 (PSPTGFLHVGG) is the 'HIGH' region element. Residues C97, C99, C124, and D126 each contribute to the Zn(2+) site. Residues 236 to 240 (KLSKR) carry the 'KMSKS' region motif. K239 contributes to the ATP binding site.

This sequence belongs to the class-I aminoacyl-tRNA synthetase family. Glutamate--tRNA ligase type 1 subfamily. Monomer. Zn(2+) is required as a cofactor.

It is found in the cytoplasm. The enzyme catalyses tRNA(Glu) + L-glutamate + ATP = L-glutamyl-tRNA(Glu) + AMP + diphosphate. Catalyzes the attachment of glutamate to tRNA(Glu) in a two-step reaction: glutamate is first activated by ATP to form Glu-AMP and then transferred to the acceptor end of tRNA(Glu). The chain is Glutamate--tRNA ligase from Francisella tularensis subsp. holarctica (strain FTNF002-00 / FTA).